Reading from the N-terminus, the 691-residue chain is Gex-3-interacting protein 13 (691 aa).

Disordered regions lie at residues 18-97 (TASL…SAHL) and 171-195 (PASP…KRQR). A compositionally biased stretch (low complexity) spans 31–46 (SSFTTTSESTSPPYSS). Over residues 47–57 (SEHHSPTDQRT) the composition is skewed to basic and acidic residues. A compositionally biased stretch (polar residues) spans 58-79 (ETPTSDSGNASFSPENVATSFE). The span at 171-183 (PASPCTTAASAPS) shows a compositional bias: low complexity. 2 consecutive BED-type zinc fingers follow at residues 194–242 (QRRN…YEKV) and 424–473 (LRRH…YEKV). Positions 212, 215, 230, 235, 443, 446, 461, and 466 each coordinate Zn(2+).

As to quaternary structure, interacts with gex-3.

This chain is Gex-3-interacting protein 13 (gei-13), found in Caenorhabditis elegans.